The following is an 870-amino-acid chain: Valine--tRNA ligase (870 aa).

Positions Pro-42–His-52 match the 'HIGH' region motif. Residues Lys-527–Ser-531 carry the 'KMSKS' region motif. Lys-530 contacts ATP. Residues Leu-800–Gly-870 are a coiled coil.

Belongs to the class-I aminoacyl-tRNA synthetase family. ValS type 1 subfamily. Monomer.

Its subcellular location is the cytoplasm. It carries out the reaction tRNA(Val) + L-valine + ATP = L-valyl-tRNA(Val) + AMP + diphosphate. In terms of biological role, catalyzes the attachment of valine to tRNA(Val). As ValRS can inadvertently accommodate and process structurally similar amino acids such as threonine, to avoid such errors, it has a 'posttransfer' editing activity that hydrolyzes mischarged Thr-tRNA(Val) in a tRNA-dependent manner. The polypeptide is Valine--tRNA ligase (Campylobacter jejuni subsp. jejuni serotype O:2 (strain ATCC 700819 / NCTC 11168)).